A 287-amino-acid polypeptide reads, in one-letter code: S-methyl-5'-thioadenosine phosphorylase (287 aa).

Phosphate contacts are provided by residues threonine 13 and arginine 55–histidine 56. Position 186 (methionine 186) interacts with substrate. Threonine 187 contacts phosphate. Substrate is bound at residue aspartate 210–aspartate 212.

Belongs to the PNP/MTAP phosphorylase family. MTAP subfamily. Homohexamer. Dimer of a homotrimer.

The enzyme catalyses S-methyl-5'-thioadenosine + phosphate = 5-(methylsulfanyl)-alpha-D-ribose 1-phosphate + adenine. Its pathway is amino-acid biosynthesis; L-methionine biosynthesis via salvage pathway; S-methyl-5-thio-alpha-D-ribose 1-phosphate from S-methyl-5'-thioadenosine (phosphorylase route): step 1/1. Catalyzes the reversible phosphorylation of S-methyl-5'-thioadenosine (MTA) to adenine and 5-methylthioribose-1-phosphate. Involved in the breakdown of MTA, a major by-product of polyamine biosynthesis. Responsible for the first step in the methionine salvage pathway after MTA has been generated from S-adenosylmethionine. Has broad substrate specificity with 6-aminopurine nucleosides as preferred substrates. This Leptospira interrogans serogroup Icterohaemorrhagiae serovar Lai (strain 56601) protein is S-methyl-5'-thioadenosine phosphorylase.